The following is a 388-amino-acid chain: Succinate--CoA ligase [ADP-forming] subunit beta (388 aa).

One can recognise an ATP-grasp domain in the interval 9-244 (KQLFAEYGLP…PSQEDEREAH (236 aa)). ATP contacts are provided by residues Lys-46, 53-55 (GRG), Glu-99, Thr-102, and Glu-107. Mg(2+) contacts are provided by Asn-199 and Asp-213. Substrate contacts are provided by residues Asn-264 and 321-323 (GIV).

The protein belongs to the succinate/malate CoA ligase beta subunit family. In terms of assembly, heterotetramer of two alpha and two beta subunits. Requires Mg(2+) as cofactor.

The catalysed reaction is succinate + ATP + CoA = succinyl-CoA + ADP + phosphate. It catalyses the reaction GTP + succinate + CoA = succinyl-CoA + GDP + phosphate. Its pathway is carbohydrate metabolism; tricarboxylic acid cycle; succinate from succinyl-CoA (ligase route): step 1/1. In terms of biological role, succinyl-CoA synthetase functions in the citric acid cycle (TCA), coupling the hydrolysis of succinyl-CoA to the synthesis of either ATP or GTP and thus represents the only step of substrate-level phosphorylation in the TCA. The beta subunit provides nucleotide specificity of the enzyme and binds the substrate succinate, while the binding sites for coenzyme A and phosphate are found in the alpha subunit. The chain is Succinate--CoA ligase [ADP-forming] subunit beta from Marinomonas sp. (strain MWYL1).